We begin with the raw amino-acid sequence, 93 residues long: Small ribosomal subunit protein uS19 (93 aa).

This sequence belongs to the universal ribosomal protein uS19 family.

Functionally, protein S19 forms a complex with S13 that binds strongly to the 16S ribosomal RNA. The sequence is that of Small ribosomal subunit protein uS19 from Synechococcus sp. (strain JA-3-3Ab) (Cyanobacteria bacterium Yellowstone A-Prime).